A 390-amino-acid chain; its full sequence is Lissencephaly-1 homolog (390 aa).

Residues 7–39 form the LisH domain; the sequence is QREEINRAVAEYLQNNGYSEAFNMLLKEASLSE. Residues 54 to 80 adopt a coiled-coil conformation; sequence TTVLRLQRKVNDLEAKLLESQQEINHG. WD repeat units follow at residues 104–145, 146–185, 189–228, 231–270, 272–313, 316–355, and 358–390; these read GHRL…KTLK, GHTD…DCLK, GHEH…CVFT, GHND…RNWY, EIMS…VIFT, AHEN…CMKA, and AHEH…WECR.

It belongs to the WD repeat LIS1/nudF family.

It localises to the cytoplasm. It is found in the cytoskeleton. The protein resides in the microtubule organizing center. Its subcellular location is the centrosome. Its function is as follows. Positively regulates the activity of the minus-end directed microtubule motor protein dynein. May enhance dynein-mediated microtubule sliding by targeting dynein to the microtubule plus end. Required for several dynein- and microtubule-dependent processes. This is Lissencephaly-1 homolog from Caenorhabditis briggsae.